Here is a 119-residue protein sequence, read N- to C-terminus: Ribosome-binding factor A (119 aa).

The protein belongs to the RbfA family. Monomer. Binds 30S ribosomal subunits, but not 50S ribosomal subunits or 70S ribosomes.

It localises to the cytoplasm. Its function is as follows. One of several proteins that assist in the late maturation steps of the functional core of the 30S ribosomal subunit. Associates with free 30S ribosomal subunits (but not with 30S subunits that are part of 70S ribosomes or polysomes). Required for efficient processing of 16S rRNA. May interact with the 5'-terminal helix region of 16S rRNA. The chain is Ribosome-binding factor A from Pseudothermotoga lettingae (strain ATCC BAA-301 / DSM 14385 / NBRC 107922 / TMO) (Thermotoga lettingae).